Reading from the N-terminus, the 279-residue chain is Polyamine aminopropyltransferase (279 aa).

One can recognise a PABS domain in the interval 4-237; that stretch reads IEWYPRGYGV…SPWAFLVGIK (234 aa). Q29 serves as a coordination point for S-methyl-5'-thioadenosine. The spermidine site is built by H60 and D84. S-methyl-5'-thioadenosine-binding positions include E104 and 141–142; that span reads DG. D158 functions as the Proton acceptor in the catalytic mechanism. 158 to 161 is a spermidine binding site; that stretch reads DSTD. An S-methyl-5'-thioadenosine-binding site is contributed by P165.

This sequence belongs to the spermidine/spermine synthase family. As to quaternary structure, homodimer or homotetramer.

It localises to the cytoplasm. The catalysed reaction is S-adenosyl 3-(methylsulfanyl)propylamine + putrescine = S-methyl-5'-thioadenosine + spermidine + H(+). It participates in amine and polyamine biosynthesis; spermidine biosynthesis; spermidine from putrescine: step 1/1. In terms of biological role, catalyzes the irreversible transfer of a propylamine group from the amino donor S-adenosylmethioninamine (decarboxy-AdoMet) to putrescine (1,4-diaminobutane) to yield spermidine. This is Polyamine aminopropyltransferase from Pyrococcus abyssi (strain GE5 / Orsay).